The following is a 967-amino-acid chain: Isoleucine--tRNA ligase 2 (967 aa).

Residues P58–H68 carry the 'HIGH' region motif. Residues A437 to G446 show a composition bias toward low complexity. Residues A437–L466 form a disordered region. E598 contributes to the L-isoleucyl-5'-AMP binding site. The 'KMSKS' region motif lies at K639–S643. K642 is an ATP binding site. Positions 922, 925, 942, and 945 each coordinate Zn(2+).

Belongs to the class-I aminoacyl-tRNA synthetase family. IleS type 1 subfamily. As to quaternary structure, monomer. Requires Zn(2+) as cofactor.

Its subcellular location is the cytoplasm. The catalysed reaction is tRNA(Ile) + L-isoleucine + ATP = L-isoleucyl-tRNA(Ile) + AMP + diphosphate. Its function is as follows. Catalyzes the attachment of isoleucine to tRNA(Ile). As IleRS can inadvertently accommodate and process structurally similar amino acids such as valine, to avoid such errors it has two additional distinct tRNA(Ile)-dependent editing activities. One activity is designated as 'pretransfer' editing and involves the hydrolysis of activated Val-AMP. The other activity is designated 'posttransfer' editing and involves deacylation of mischarged Val-tRNA(Ile). This Burkholderia mallei (strain ATCC 23344) protein is Isoleucine--tRNA ligase 2.